We begin with the raw amino-acid sequence, 529 residues long: Peptide chain release factor 3 (529 aa).

In terms of domain architecture, tr-type G spans 11 to 280 (AKRRTFAIIS…GLVEWAPAPM (270 aa)). GTP contacts are provided by residues 20-27 (SHPDAGKT), 88-92 (DTPGH), and 142-145 (NKLD).

It belongs to the TRAFAC class translation factor GTPase superfamily. Classic translation factor GTPase family. PrfC subfamily.

The protein resides in the cytoplasm. In terms of biological role, increases the formation of ribosomal termination complexes and stimulates activities of RF-1 and RF-2. It binds guanine nucleotides and has strong preference for UGA stop codons. It may interact directly with the ribosome. The stimulation of RF-1 and RF-2 is significantly reduced by GTP and GDP, but not by GMP. The sequence is that of Peptide chain release factor 3 from Shigella flexneri.